Consider the following 285-residue polypeptide: Ribosomal RNA small subunit methyltransferase A (285 aa).

S-adenosyl-L-methionine contacts are provided by Asn11, Leu13, Gly37, Glu57, Asp85, and Asn105.

This sequence belongs to the class I-like SAM-binding methyltransferase superfamily. rRNA adenine N(6)-methyltransferase family. RsmA subfamily.

Its subcellular location is the cytoplasm. It carries out the reaction adenosine(1518)/adenosine(1519) in 16S rRNA + 4 S-adenosyl-L-methionine = N(6)-dimethyladenosine(1518)/N(6)-dimethyladenosine(1519) in 16S rRNA + 4 S-adenosyl-L-homocysteine + 4 H(+). Specifically dimethylates two adjacent adenosines (A1518 and A1519) in the loop of a conserved hairpin near the 3'-end of 16S rRNA in the 30S particle. May play a critical role in biogenesis of 30S subunits. The sequence is that of Ribosomal RNA small subunit methyltransferase A from Campylobacter curvus (strain 525.92).